Consider the following 343-residue polypeptide: Phenylalanine--tRNA ligase alpha subunit (343 aa).

Residue glutamate 256 coordinates Mg(2+).

Belongs to the class-II aminoacyl-tRNA synthetase family. Phe-tRNA synthetase alpha subunit type 1 subfamily. As to quaternary structure, tetramer of two alpha and two beta subunits. It depends on Mg(2+) as a cofactor.

The protein localises to the cytoplasm. It carries out the reaction tRNA(Phe) + L-phenylalanine + ATP = L-phenylalanyl-tRNA(Phe) + AMP + diphosphate + H(+). The polypeptide is Phenylalanine--tRNA ligase alpha subunit (Prosthecochloris aestuarii (strain DSM 271 / SK 413)).